The following is a 171-amino-acid chain: 3-hydroxydecanoyl-[acyl-carrier-protein] dehydratase (171 aa).

His69 is a catalytic residue.

This sequence belongs to the thioester dehydratase family. FabA subfamily. In terms of assembly, homodimer.

The protein localises to the cytoplasm. The enzyme catalyses a (3R)-hydroxyacyl-[ACP] = a (2E)-enoyl-[ACP] + H2O. It catalyses the reaction (3R)-hydroxydecanoyl-[ACP] = (2E)-decenoyl-[ACP] + H2O. It carries out the reaction (2E)-decenoyl-[ACP] = (3Z)-decenoyl-[ACP]. It participates in lipid metabolism; fatty acid biosynthesis. In terms of biological role, necessary for the introduction of cis unsaturation into fatty acids. Catalyzes the dehydration of (3R)-3-hydroxydecanoyl-ACP to E-(2)-decenoyl-ACP and then its isomerization to Z-(3)-decenoyl-ACP. Can catalyze the dehydratase reaction for beta-hydroxyacyl-ACPs with saturated chain lengths up to 16:0, being most active on intermediate chain length. The protein is 3-hydroxydecanoyl-[acyl-carrier-protein] dehydratase of Caulobacter sp. (strain K31).